The following is a 274-amino-acid chain: 2,3,4,5-tetrahydropyridine-2,6-dicarboxylate N-succinyltransferase (274 aa).

Substrate is bound by residues Arg104 and Asp141.

It belongs to the transferase hexapeptide repeat family. As to quaternary structure, homotrimer.

Its subcellular location is the cytoplasm. It catalyses the reaction (S)-2,3,4,5-tetrahydrodipicolinate + succinyl-CoA + H2O = (S)-2-succinylamino-6-oxoheptanedioate + CoA. The protein operates within amino-acid biosynthesis; L-lysine biosynthesis via DAP pathway; LL-2,6-diaminopimelate from (S)-tetrahydrodipicolinate (succinylase route): step 1/3. The sequence is that of 2,3,4,5-tetrahydropyridine-2,6-dicarboxylate N-succinyltransferase from Shewanella baltica (strain OS155 / ATCC BAA-1091).